Here is a 283-residue protein sequence, read N- to C-terminus: Thymidylate synthase (283 aa).

Position 22 (Arg22) interacts with dUMP. Cys160 (nucleophile) is an active-site residue. Residues Arg180 to Asp183, Asn191, and His221 to Tyr223 each bind dUMP. Asp183 lines the (6R)-5,10-methylene-5,6,7,8-tetrahydrofolate pocket. Ser282 is a binding site for (6R)-5,10-methylene-5,6,7,8-tetrahydrofolate.

It belongs to the thymidylate synthase family. Bacterial-type ThyA subfamily. As to quaternary structure, homodimer.

Its subcellular location is the cytoplasm. The enzyme catalyses dUMP + (6R)-5,10-methylene-5,6,7,8-tetrahydrofolate = 7,8-dihydrofolate + dTMP. The protein operates within pyrimidine metabolism; dTTP biosynthesis. Its function is as follows. Catalyzes the reductive methylation of 2'-deoxyuridine-5'-monophosphate (dUMP) to 2'-deoxythymidine-5'-monophosphate (dTMP) while utilizing 5,10-methylenetetrahydrofolate (mTHF) as the methyl donor and reductant in the reaction, yielding dihydrofolate (DHF) as a by-product. This enzymatic reaction provides an intracellular de novo source of dTMP, an essential precursor for DNA biosynthesis. This is Thymidylate synthase from Shewanella pealeana (strain ATCC 700345 / ANG-SQ1).